Here is a 764-residue protein sequence, read N- to C-terminus: Metabotropic glutamate receptor-like protein H (764 aa).

A signal peptide spans 1–20 (MKNILKILILILICINKINC). Residues 21 to 393 (LDGDGKQFRM…EVEFSQSIQN (373 aa)) are Extracellular-facing. Asn-72, Asn-260, Asn-278, Asn-344, and Asn-379 each carry an N-linked (GlcNAc...) asparagine glycan. The helical transmembrane segment at 394 to 414 (GFSITTGILIGITILMMIGII) threads the bilayer. Over 415-427 (KYSKTPSMRSASP) the chain is Cytoplasmic. The helical transmembrane segment at 428–448 (IFLNFILAGGIIVYIGIIVWV) threads the bilayer. Residues 449 to 464 (GPMSTHSCNARLWLVT) are Extracellular-facing. The helical transmembrane segment at 465 to 485 (LGFSTLIGSLVVKNFRIWLIF) threads the bilayer. At 486–500 (DNPELKSIKITNYQL) the chain is on the cytoplasmic side. A helical membrane pass occupies residues 501–521 (FPWVGACLVINIILMAILTSV). At 522–552 (GDLKQIDAMNIDSLGKYEYMKVCKMNSSGAS) the chain is on the extracellular side. Asn-547 carries N-linked (GlcNAc...) asparagine glycosylation. The chain crosses the membrane as a helical span at residues 553-573 (TLYTILAYFAALLLVGVFVSW). Topologically, residues 574 to 587 (KIRIVDILEFNESG) are cytoplasmic. Residues 588 to 608 (AIANTLYAISFCLFVIVPLMI) form a helical membrane-spanning segment. The Extracellular portion of the chain corresponds to 609 to 617 (SPQDMQSET). Residues 618-638 (IILCTTGLFITTAALLIIFIP) traverse the membrane as a helical segment. Topologically, residues 639–764 (KFWRVFRKGA…IIVNDSENNN (126 aa)) are cytoplasmic. The disordered stretch occupies residues 664–764 (ATARAESGSK…IIVNDSENNN (101 aa)). Low complexity predominate over residues 671 to 690 (GSKGSNGNASSGNRTNRRGN). Over residues 707 to 719 (ENQKEKEKIKDDV) the composition is skewed to basic and acidic residues. Residues 731–748 (FTDEASDTDNNEFNDIEL) show a composition bias toward acidic residues.

The protein in the N-terminal section; belongs to the BMP lipoprotein family. It in the C-terminal section; belongs to the G-protein coupled receptor 3 family. GABA-B receptor subfamily.

The protein localises to the membrane. This Dictyostelium discoideum (Social amoeba) protein is Metabotropic glutamate receptor-like protein H (grlH).